The sequence spans 642 residues: Threonine--tRNA ligase (642 aa).

One can recognise a TGS domain in the interval 1–61 (MPVITLPDGS…VDDASVAIIT (61 aa)). The catalytic stretch occupies residues 243-534 (DHRKIGKQLD…LTEEYAGFFP (292 aa)). Zn(2+) contacts are provided by cysteine 334, histidine 385, and histidine 511.

Belongs to the class-II aminoacyl-tRNA synthetase family. As to quaternary structure, homodimer. Requires Zn(2+) as cofactor.

It localises to the cytoplasm. It catalyses the reaction tRNA(Thr) + L-threonine + ATP = L-threonyl-tRNA(Thr) + AMP + diphosphate + H(+). Catalyzes the attachment of threonine to tRNA(Thr) in a two-step reaction: L-threonine is first activated by ATP to form Thr-AMP and then transferred to the acceptor end of tRNA(Thr). Also edits incorrectly charged L-seryl-tRNA(Thr). The sequence is that of Threonine--tRNA ligase from Erwinia tasmaniensis (strain DSM 17950 / CFBP 7177 / CIP 109463 / NCPPB 4357 / Et1/99).